We begin with the raw amino-acid sequence, 439 residues long: GTPase Der (439 aa).

2 consecutive EngA-type G domains span residues 4 to 168 (PIVA…KDDE) and 177 to 352 (INIA…DNYT). GTP is bound by residues 10–17 (GRPNVGKS), 57–61 (DTGGI), 120–123 (NKID), 183–190 (GKPNVGKS), 230–234 (DTAGL), and 295–298 (NKWD). Residues 353-437 (KRVKTGVLND…GIKLEFRERK (85 aa)) form the KH-like domain.

Belongs to the TRAFAC class TrmE-Era-EngA-EngB-Septin-like GTPase superfamily. EngA (Der) GTPase family. Associates with the 50S ribosomal subunit.

In terms of biological role, GTPase that plays an essential role in the late steps of ribosome biogenesis. This chain is GTPase Der, found in Clostridium botulinum (strain Okra / Type B1).